A 160-amino-acid polypeptide reads, in one-letter code: Endoribonuclease YbeY (160 aa).

The Zn(2+) site is built by H127, H131, and H137.

It belongs to the endoribonuclease YbeY family. It depends on Zn(2+) as a cofactor.

It is found in the cytoplasm. Functionally, single strand-specific metallo-endoribonuclease involved in late-stage 70S ribosome quality control and in maturation of the 3' terminus of the 16S rRNA. This is Endoribonuclease YbeY from Synechococcus sp. (strain RCC307).